The primary structure comprises 407 residues: Lysophospholipid transporter LplT (407 aa).

11 consecutive transmembrane segments (helical) span residues 18 to 38 (AVII…FATL), 53 to 73 (FLQM…GQIA), 91 to 111 (AGAL…LVGV), 139 to 159 (LMEA…GVLA), 163 to 183 (IYGA…ANML), 229 to 249 (WGAG…ALGI), 257 to 277 (LLNA…AKLV), 286 to 306 (LPAG…HNLM), 310 to 330 (SLLI…NALL), 343 to 365 (AIAV…YSLV), and 375 to 395 (IGIG…VWLI).

Belongs to the major facilitator superfamily. LplT (TC 2.A.1.42) family.

The protein localises to the cell inner membrane. In terms of biological role, catalyzes the facilitated diffusion of 2-acyl-glycero-3-phosphoethanolamine (2-acyl-GPE) into the cell. In Pectobacterium carotovorum subsp. carotovorum (strain PC1), this protein is Lysophospholipid transporter LplT.